The primary structure comprises 219 residues: NAD(P)H-quinone oxidoreductase subunit K 2 (219 aa).

Cysteine 53, cysteine 54, cysteine 118, and cysteine 149 together coordinate [4Fe-4S] cluster.

Belongs to the complex I 20 kDa subunit family. In terms of assembly, NDH-1 can be composed of about 15 different subunits; different subcomplexes with different compositions have been identified which probably have different functions. It depends on [4Fe-4S] cluster as a cofactor.

The protein resides in the cellular thylakoid membrane. It carries out the reaction a plastoquinone + NADH + (n+1) H(+)(in) = a plastoquinol + NAD(+) + n H(+)(out). It catalyses the reaction a plastoquinone + NADPH + (n+1) H(+)(in) = a plastoquinol + NADP(+) + n H(+)(out). Functionally, NDH-1 shuttles electrons from an unknown electron donor, via FMN and iron-sulfur (Fe-S) centers, to quinones in the respiratory and/or the photosynthetic chain. The immediate electron acceptor for the enzyme in this species is believed to be plastoquinone. Couples the redox reaction to proton translocation, and thus conserves the redox energy in a proton gradient. Cyanobacterial NDH-1 also plays a role in inorganic carbon-concentration. This chain is NAD(P)H-quinone oxidoreductase subunit K 2, found in Synechocystis sp. (strain ATCC 27184 / PCC 6803 / Kazusa).